The primary structure comprises 209 residues: Thiamine-phosphate synthase (209 aa).

Residues 40–44 (QLREK) and asparagine 72 contribute to the 4-amino-2-methyl-5-(diphosphooxymethyl)pyrimidine site. The Mg(2+) site is built by aspartate 73 and aspartate 92. A 4-amino-2-methyl-5-(diphosphooxymethyl)pyrimidine-binding site is contributed by serine 111. 137 to 139 (TNS) is a 2-[(2R,5Z)-2-carboxy-4-methylthiazol-5(2H)-ylidene]ethyl phosphate binding site. Position 140 (lysine 140) interacts with 4-amino-2-methyl-5-(diphosphooxymethyl)pyrimidine. 2-[(2R,5Z)-2-carboxy-4-methylthiazol-5(2H)-ylidene]ethyl phosphate is bound by residues glycine 167 and 187–188 (IS).

It belongs to the thiamine-phosphate synthase family. Mg(2+) serves as cofactor.

It catalyses the reaction 2-[(2R,5Z)-2-carboxy-4-methylthiazol-5(2H)-ylidene]ethyl phosphate + 4-amino-2-methyl-5-(diphosphooxymethyl)pyrimidine + 2 H(+) = thiamine phosphate + CO2 + diphosphate. The catalysed reaction is 2-(2-carboxy-4-methylthiazol-5-yl)ethyl phosphate + 4-amino-2-methyl-5-(diphosphooxymethyl)pyrimidine + 2 H(+) = thiamine phosphate + CO2 + diphosphate. It carries out the reaction 4-methyl-5-(2-phosphooxyethyl)-thiazole + 4-amino-2-methyl-5-(diphosphooxymethyl)pyrimidine + H(+) = thiamine phosphate + diphosphate. It functions in the pathway cofactor biosynthesis; thiamine diphosphate biosynthesis; thiamine phosphate from 4-amino-2-methyl-5-diphosphomethylpyrimidine and 4-methyl-5-(2-phosphoethyl)-thiazole: step 1/1. In terms of biological role, condenses 4-methyl-5-(beta-hydroxyethyl)thiazole monophosphate (THZ-P) and 2-methyl-4-amino-5-hydroxymethyl pyrimidine pyrophosphate (HMP-PP) to form thiamine monophosphate (TMP). This is Thiamine-phosphate synthase from Clostridium tetani (strain Massachusetts / E88).